A 66-amino-acid chain; its full sequence is Large ribosomal subunit protein uL29 (66 aa).

It belongs to the universal ribosomal protein uL29 family.

This Helicobacter pylori (strain Shi470) protein is Large ribosomal subunit protein uL29.